A 935-amino-acid polypeptide reads, in one-letter code: Protein translocase subunit SecA (935 aa).

ATP is bound by residues glutamine 90, 108 to 112 (GEGKT), and aspartate 504.

This sequence belongs to the SecA family. Monomer and homodimer. Part of the essential Sec protein translocation apparatus which comprises SecA, SecYEG and auxiliary proteins SecDF. Other proteins may also be involved.

Its subcellular location is the cell inner membrane. It localises to the cellular thylakoid membrane. The protein resides in the cytoplasm. It carries out the reaction ATP + H2O + cellular proteinSide 1 = ADP + phosphate + cellular proteinSide 2.. Part of the Sec protein translocase complex. Interacts with the SecYEG preprotein conducting channel. Has a central role in coupling the hydrolysis of ATP to the transfer of proteins into and across the cell membrane, serving as an ATP-driven molecular motor driving the stepwise translocation of polypeptide chains across the membrane. Its function is as follows. Probably participates in protein translocation into and across both the cytoplasmic and thylakoid membranes in cyanobacterial cells. In Gloeothece citriformis (strain PCC 7424) (Cyanothece sp. (strain PCC 7424)), this protein is Protein translocase subunit SecA.